Consider the following 287-residue polypeptide: Energy-coupling factor transporter ATP-binding protein EcfA2 (287 aa).

An ABC transporter domain is found at 3 to 246 (VKFSQVSYVY…TNYVNQLHLD (244 aa)). Residue 40–47 (GQTGSGKS) participates in ATP binding.

Belongs to the ABC transporter superfamily. Energy-coupling factor EcfA family. As to quaternary structure, forms a stable energy-coupling factor (ECF) transporter complex composed of 2 membrane-embedded substrate-binding proteins (S component), 2 ATP-binding proteins (A component) and 2 transmembrane proteins (T component).

It localises to the cell membrane. Its function is as follows. ATP-binding (A) component of a common energy-coupling factor (ECF) ABC-transporter complex. Unlike classic ABC transporters this ECF transporter provides the energy necessary to transport a number of different substrates. This Staphylococcus saprophyticus subsp. saprophyticus (strain ATCC 15305 / DSM 20229 / NCIMB 8711 / NCTC 7292 / S-41) protein is Energy-coupling factor transporter ATP-binding protein EcfA2.